The following is a 72-amino-acid chain: Putative snRNP Sm-like protein (72 aa).

The 69-residue stretch at Arg-4–Pro-72 folds into the Sm domain.

This sequence belongs to the snRNP Sm proteins family.

The protein is Putative snRNP Sm-like protein of Methanosarcina barkeri (strain Fusaro / DSM 804).